Here is a 158-residue protein sequence, read N- to C-terminus: Crossover junction endodeoxyribonuclease RuvC (158 aa).

Active-site residues include Asp-7, Glu-67, and Asp-139. Residues Asp-7, Glu-67, and Asp-139 each contribute to the Mg(2+) site.

Belongs to the RuvC family. Homodimer which binds Holliday junction (HJ) DNA. The HJ becomes 2-fold symmetrical on binding to RuvC with unstacked arms; it has a different conformation from HJ DNA in complex with RuvA. In the full resolvosome a probable DNA-RuvA(4)-RuvB(12)-RuvC(2) complex forms which resolves the HJ. It depends on Mg(2+) as a cofactor.

The protein localises to the cytoplasm. It catalyses the reaction Endonucleolytic cleavage at a junction such as a reciprocal single-stranded crossover between two homologous DNA duplexes (Holliday junction).. Functionally, the RuvA-RuvB-RuvC complex processes Holliday junction (HJ) DNA during genetic recombination and DNA repair. Endonuclease that resolves HJ intermediates. Cleaves cruciform DNA by making single-stranded nicks across the HJ at symmetrical positions within the homologous arms, yielding a 5'-phosphate and a 3'-hydroxyl group; requires a central core of homology in the junction. The consensus cleavage sequence is 5'-(A/T)TT(C/G)-3'. Cleavage occurs on the 3'-side of the TT dinucleotide at the point of strand exchange. HJ branch migration catalyzed by RuvA-RuvB allows RuvC to scan DNA until it finds its consensus sequence, where it cleaves and resolves the cruciform DNA. The sequence is that of Crossover junction endodeoxyribonuclease RuvC from Prochlorococcus marinus (strain MIT 9211).